Consider the following 158-residue polypeptide: Phosphopantetheine adenylyltransferase (158 aa).

A substrate-binding site is contributed by Ser8. Residues 8–9 (SF) and His16 each bind ATP. Residues Lys40, Thr72, and Arg86 each contribute to the substrate site. Residues 87-89 (GLR), Glu97, and 122-128 (HSFLSSS) contribute to the ATP site.

Belongs to the bacterial CoaD family. Homohexamer. Mg(2+) serves as cofactor.

It localises to the cytoplasm. The enzyme catalyses (R)-4'-phosphopantetheine + ATP + H(+) = 3'-dephospho-CoA + diphosphate. It participates in cofactor biosynthesis; coenzyme A biosynthesis; CoA from (R)-pantothenate: step 4/5. Functionally, reversibly transfers an adenylyl group from ATP to 4'-phosphopantetheine, yielding dephospho-CoA (dPCoA) and pyrophosphate. The polypeptide is Phosphopantetheine adenylyltransferase (Prochlorococcus marinus (strain NATL2A)).